A 219-amino-acid polypeptide reads, in one-letter code: 2-hydroxy-3-keto-5-methylthiopentenyl-1-phosphate phosphatase (219 aa).

Belongs to the HAD-like hydrolase superfamily. MtnX family.

The enzyme catalyses 2-hydroxy-5-methylsulfanyl-3-oxopent-1-enyl phosphate + H2O = 1,2-dihydroxy-5-(methylsulfanyl)pent-1-en-3-one + phosphate. It functions in the pathway amino-acid biosynthesis; L-methionine biosynthesis via salvage pathway; L-methionine from S-methyl-5-thio-alpha-D-ribose 1-phosphate: step 4/6. In terms of biological role, dephosphorylates 2-hydroxy-3-keto-5-methylthiopentenyl-1-phosphate (HK-MTPenyl-1-P) yielding 1,2-dihydroxy-3-keto-5-methylthiopentene (DHK-MTPene). The protein is 2-hydroxy-3-keto-5-methylthiopentenyl-1-phosphate phosphatase of Bacillus cereus (strain B4264).